The primary structure comprises 355 residues: Septin-2B (355 aa).

Positions 33 to 305 (KGFEFTLMVV…ENFRSERLKK (273 aa)) constitute a Septin-type G domain. Residues 43–50 (GESGLGKS) are G1 motif. GTP is bound by residues 43-50 (GESGLGKS), T77, G103, 182-190 (KADTLTLRE), G240, and R255. Residues 100-103 (DTPG) are G3 motif. The tract at residues 181–184 (AKAD) is G4 motif. Positions 259 to 269 (WGVVEVENPEH) are important for dimerization.

Belongs to the TRAFAC class TrmE-Era-EngA-EngB-Septin-like GTPase superfamily. Septin GTPase family. As to quaternary structure, septins polymerize into heterooligomeric protein complexes that form filaments, and associate with cellular membranes, actin filaments and microtubules. GTPase activity is required for filament formation. Can form heterooligomers with other family members and form filaments. Interacts with wdpcp.

The protein resides in the cytoplasm. It is found in the cytoskeleton. Its subcellular location is the spindle. It localises to the cleavage furrow. The protein localises to the midbody. The protein resides in the cell cortex. It is found in the cell projection. Its subcellular location is the cilium membrane. Its function is as follows. Filament-forming cytoskeletal GTPase. Required for normal organization of the actin cytoskeleton. Plays a role in the biogenesis of polarized columnar-shaped epithelium. Required for the progression through mitosis through regulation of chromosome congression. During anaphase, may be required for chromosome segregation and spindle elongation. Plays a role in ciliogenesis and collective cell movements including convergent extension during gastrulation. In cilia, required for the integrity of the diffusion barrier at the base of the primary cilium that prevents diffusion of transmembrane proteins between the cilia and plasma membranes. Controls cell shape and not polarization of cells during convergent extension. In Xenopus tropicalis (Western clawed frog), this protein is Septin-2B (sept2-B).